The sequence spans 147 residues: Ribosome maturation factor RimP (147 aa).

Belongs to the RimP family.

The protein localises to the cytoplasm. Functionally, required for maturation of 30S ribosomal subunits. The protein is Ribosome maturation factor RimP of Thermosipho melanesiensis (strain DSM 12029 / CIP 104789 / BI429).